Here is a 471-residue protein sequence, read N- to C-terminus: Putative multidrug resistance protein MdtD (471 aa).

Over 1–11 the chain is Periplasmic; that stretch reads MTDLPDSTRWQ. The chain crosses the membrane as a helical span at residues 12–32; sequence LWIVAFGFFMQSLDTTIVNTA. The Cytoplasmic segment spans residues 33-48; it reads LPSMAQSLGESPLHMH. A helical transmembrane segment spans residues 49 to 69; that stretch reads MVIVSYVLTVAVMLPASGWLA. The Periplasmic segment spans residues 70 to 76; that stretch reads DKVGVRN. Residues 77 to 97 traverse the membrane as a helical segment; the sequence is IFFTAIVLFTLGSLFCALSGT. Topologically, residues 98 to 101 are cytoplasmic; the sequence is LNEL. Residues 102–124 form a helical membrane-spanning segment; that stretch reads LLARALQGVGGAMMVPVGRLTVM. Topologically, residues 125-137 are periplasmic; sequence KIVPREQYMAAMT. The helical transmembrane segment at 138-158 threads the bilayer; it reads FVTLPGQVGPLLGPALGGLLV. The Cytoplasmic segment spans residues 159-164; the sequence is EYASWH. Residues 165–185 form a helical membrane-spanning segment; sequence WIFLINIPVGIIGAIATLMLM. Topologically, residues 186 to 196 are periplasmic; the sequence is PNYTMQTRRFD. A helical transmembrane segment spans residues 197 to 217; it reads LSGFLLLAVGMAVLTLALDGS. Over 218-224 the chain is Cytoplasmic; it reads KGTGFSP. Residues 225–245 traverse the membrane as a helical segment; sequence LAIAGLVAVGVVALVLYLLHA. Residues 246–262 are Periplasmic-facing; it reads QNNNRALFSLKLFRTRN. A helical transmembrane segment spans residues 263 to 283; it reads FSLGLAGSFAGRIGSGMLPFM. Over 284–285 the chain is Cytoplasmic; sequence TP. Residues 286–306 form a helical membrane-spanning segment; that stretch reads VFLQIGLGFSPFHAGLMMIPM. The Periplasmic segment spans residues 307–341; that stretch reads VLGSMGMKRIVVQVVNRFGYRRVLVATTLGLSLVT. The chain crosses the membrane as a helical span at residues 342–362; that stretch reads LLFMTTALLGWYYVLPFVLFL. At 363–395 the chain is on the cytoplasmic side; that stretch reads QGMVNSTRFSSMNTLTLKDLPDNLASSGNSLLS. A helical transmembrane segment spans residues 396-416; that stretch reads MIMQLSMSIGVTIAGLLLGLF. Residues 417–430 are Periplasmic-facing; that stretch reads GSQHVSVDSGTTQT. Residues 431 to 451 form a helical membrane-spanning segment; sequence VFMYTWLSMAFIIALPAFVFA. Residues 452–471 are Cytoplasmic-facing; it reads RVPSDTHQNVAISRRKRSAQ.

This sequence belongs to the major facilitator superfamily. TCR/Tet family.

The protein resides in the cell inner membrane. The sequence is that of Putative multidrug resistance protein MdtD from Escherichia coli O1:K1 / APEC.